The following is a 469-amino-acid chain: tRNA-2-methylthio-N(6)-dimethylallyladenosine synthase (469 aa).

In terms of domain architecture, MTTase N-terminal spans 22 to 142 (RKVFIKTYGC…LPEALRRAKE (121 aa)). The [4Fe-4S] cluster site is built by cysteine 31, cysteine 67, cysteine 105, cysteine 183, cysteine 187, and cysteine 190. Positions 169–401 (RARGVTAFLT…QALLLKQQQE (233 aa)) constitute a Radical SAM core domain. Residues 404-466 (ESCIGKEIDL…TNSLFAERAE (63 aa)) form the TRAM domain.

This sequence belongs to the methylthiotransferase family. MiaB subfamily. As to quaternary structure, monomer. Requires [4Fe-4S] cluster as cofactor.

It localises to the cytoplasm. The catalysed reaction is N(6)-dimethylallyladenosine(37) in tRNA + (sulfur carrier)-SH + AH2 + 2 S-adenosyl-L-methionine = 2-methylsulfanyl-N(6)-dimethylallyladenosine(37) in tRNA + (sulfur carrier)-H + 5'-deoxyadenosine + L-methionine + A + S-adenosyl-L-homocysteine + 2 H(+). In terms of biological role, catalyzes the methylthiolation of N6-(dimethylallyl)adenosine (i(6)A), leading to the formation of 2-methylthio-N6-(dimethylallyl)adenosine (ms(2)i(6)A) at position 37 in tRNAs that read codons beginning with uridine. In Rhizobium etli (strain ATCC 51251 / DSM 11541 / JCM 21823 / NBRC 15573 / CFN 42), this protein is tRNA-2-methylthio-N(6)-dimethylallyladenosine synthase.